The following is a 332-amino-acid chain: MTKNLLEQLREMTVVVADTGDIQAIEKFTPRDATTNPSLITAAAKMPEYQEIVDQTLLQAKKDAGAGASKGQIVSLAFDRLAVSFGLKILQIIPGRVSTEVDARLSYDTEATITKARELIAQYKAAGIGPERVLIKIASTWEGIKAAEILEKEGIHCNLTLLFGLHQAIACAEAGITLISPFVGRILDWYKKETGRDSYPSAEDPGVLSVTTIYNYYKKFGYKTEVMGASFRNIGEITELAGSDLLTISPGLLGELQATIGELPRKLDPAKAATLDIDKISIDKATFDKMHAADRMAYDKLDEGIKGFTKALEELETLLAERLARLEVVASH.

Residue lysine 136 is the Schiff-base intermediate with substrate of the active site.

Belongs to the transaldolase family. Type 1 subfamily.

It localises to the cytoplasm. It carries out the reaction D-sedoheptulose 7-phosphate + D-glyceraldehyde 3-phosphate = D-erythrose 4-phosphate + beta-D-fructose 6-phosphate. Its pathway is carbohydrate degradation; pentose phosphate pathway; D-glyceraldehyde 3-phosphate and beta-D-fructose 6-phosphate from D-ribose 5-phosphate and D-xylulose 5-phosphate (non-oxidative stage): step 2/3. Its function is as follows. Transaldolase is important for the balance of metabolites in the pentose-phosphate pathway. The protein is Transaldolase of Nostoc sp. (strain PCC 7120 / SAG 25.82 / UTEX 2576).